The sequence spans 243 residues: 23S rRNA (guanosine-2'-O-)-methyltransferase RlmB (243 aa).

Residues glycine 196, isoleucine 216, and leucine 225 each contribute to the S-adenosyl-L-methionine site.

This sequence belongs to the class IV-like SAM-binding methyltransferase superfamily. RNA methyltransferase TrmH family. RlmB subfamily. Homodimer.

It is found in the cytoplasm. The enzyme catalyses guanosine(2251) in 23S rRNA + S-adenosyl-L-methionine = 2'-O-methylguanosine(2251) in 23S rRNA + S-adenosyl-L-homocysteine + H(+). In terms of biological role, specifically methylates the ribose of guanosine 2251 in 23S rRNA. This chain is 23S rRNA (guanosine-2'-O-)-methyltransferase RlmB, found in Salmonella typhi.